Reading from the N-terminus, the 518-residue chain is Zinc finger protein 449 (518 aa).

Positions 30–112 (RQRFRQFQYR…SLIEDLQREL (83 aa)) constitute an SCAN box domain. Residues 292–304 (NPTLGETPENSNL) show a composition bias toward polar residues. A disordered region spans residues 292–325 (NPTLGETPENSNLEEPLNPKPHKKKSPGEKPHRC). C2H2-type zinc fingers lie at residues 323–345 (HRCPQCGKCFARKSQLTGHQRIH), 351–373 (HKCPECGKRFLRSSDLYRHQRLH), 379–401 (YECTVCKKRFTRRSHLIGHQRTH), 407–429 (YKCLECGKSFCHGSSLKRHLKTH), 435–457 (HRCHNCGKSFSRLTALTLHQRTH), 463–485 (FKCNYCGKSFRQRPSLVIHLRIH), and 491–513 (YKCTHCSKSFRQRAGLIMHQVTH).

The protein belongs to the krueppel C2H2-type zinc-finger protein family.

It is found in the nucleus. Functionally, may be involved in transcriptional regulation. This chain is Zinc finger protein 449 (ZNF449), found in Pan troglodytes (Chimpanzee).